Here is a 139-residue protein sequence, read N- to C-terminus: Small ribosomal subunit protein uS12 (139 aa).

Disordered regions lie at residues 1–22 and 37–57; these read MPTI…SKSP and KTPS…TPKK. The segment covering 9–19 has biased composition (basic residues); sequence RKGRKSHKGKS. At D102 the chain carries 3-methylthioaspartic acid.

Belongs to the universal ribosomal protein uS12 family. Part of the 30S ribosomal subunit. Contacts proteins S8 and S17. May interact with IF1 in the 30S initiation complex.

With S4 and S5 plays an important role in translational accuracy. In terms of biological role, interacts with and stabilizes bases of the 16S rRNA that are involved in tRNA selection in the A site and with the mRNA backbone. Located at the interface of the 30S and 50S subunits, it traverses the body of the 30S subunit contacting proteins on the other side and probably holding the rRNA structure together. The combined cluster of proteins S8, S12 and S17 appears to hold together the shoulder and platform of the 30S subunit. This chain is Small ribosomal subunit protein uS12, found in Limosilactobacillus reuteri (strain DSM 20016) (Lactobacillus reuteri).